The following is a 1226-amino-acid chain: DNA-directed RNA polymerase subunit beta (1226 aa).

This sequence belongs to the RNA polymerase beta chain family. The RNAP catalytic core consists of 2 alpha, 1 beta, 1 beta' and 1 omega subunit. When a sigma factor is associated with the core the holoenzyme is formed, which can initiate transcription.

It catalyses the reaction RNA(n) + a ribonucleoside 5'-triphosphate = RNA(n+1) + diphosphate. Functionally, DNA-dependent RNA polymerase catalyzes the transcription of DNA into RNA using the four ribonucleoside triphosphates as substrates. The protein is DNA-directed RNA polymerase subunit beta of Leptospira interrogans serogroup Icterohaemorrhagiae serovar Lai (strain 56601).